A 225-amino-acid polypeptide reads, in one-letter code: Orotate phosphoribosyltransferase (225 aa).

Lysine 31 lines the 5-phospho-alpha-D-ribose 1-diphosphate pocket. 39–40 (FF) is a binding site for orotate. Residues 78–79 (YK), arginine 105, lysine 106, lysine 109, histidine 111, and 130–138 (DDVLTSGKA) contribute to the 5-phospho-alpha-D-ribose 1-diphosphate site. 2 residues coordinate orotate: threonine 134 and arginine 163.

Belongs to the purine/pyrimidine phosphoribosyltransferase family. PyrE subfamily. As to quaternary structure, homodimer.

The enzyme catalyses orotidine 5'-phosphate + diphosphate = orotate + 5-phospho-alpha-D-ribose 1-diphosphate. It participates in pyrimidine metabolism; UMP biosynthesis via de novo pathway; UMP from orotate: step 1/2. In terms of biological role, catalyzes the transfer of a ribosyl phosphate group from 5-phosphoribose 1-diphosphate to orotate, leading to the formation of orotidine monophosphate (OMP). This is Orotate phosphoribosyltransferase (URA5) from Cryptococcus neoformans var. grubii serotype A (strain H99 / ATCC 208821 / CBS 10515 / FGSC 9487) (Filobasidiella neoformans var. grubii).